The chain runs to 1258 residues: Ice nucleation protein (1258 aa).

Residues alanine 162–isoleucine 1217 form an octapeptide periodicity region. Disordered regions lie at residues tyrosine 260–aspartate 287, threonine 311–serine 342, tyrosine 356–aspartate 383, threonine 407–serine 438, and tyrosine 452–leucine 480. Polar residues-rich tracts occupy residues glycine 261 to serine 286, threonine 311 to serine 334, glycine 357 to serine 382, threonine 407 to serine 430, and glycine 453 to leucine 480.

It belongs to the bacterial ice nucleation protein family.

The protein localises to the cell outer membrane. Functionally, ice nucleation proteins enable bacteria to nucleate crystallization in supercooled water. The protein is Ice nucleation protein (iceE) of Enterobacter agglomerans (Erwinia herbicola).